The following is a 534-amino-acid chain: Probable protein kinase UbiB (534 aa).

The chain crosses the membrane as a helical span at residues 23–43 (DLLFDLPLPWFLLALRFALPW). The 368-residue stretch at 125–492 (RFDIEPLASA…WHKRKDDWFL (368 aa)) folds into the Protein kinase domain. Residues 131–139 (LASASVAQV) and Lys-153 contribute to the ATP site. Asp-288 (proton acceptor) is an active-site residue. 2 helical membrane-spanning segments follow: residues 490–510 (WFLR…AAGG) and 512–532 (LHEL…YLIV).

It belongs to the ABC1 family. UbiB subfamily.

Its subcellular location is the cell inner membrane. It participates in cofactor biosynthesis; ubiquinone biosynthesis [regulation]. Its function is as follows. Is probably a protein kinase regulator of UbiI activity which is involved in aerobic coenzyme Q (ubiquinone) biosynthesis. This is Probable protein kinase UbiB from Pseudomonas fluorescens (strain ATCC BAA-477 / NRRL B-23932 / Pf-5).